The sequence spans 325 residues: DNA-directed RNA polymerase subunit alpha (325 aa).

The segment at 1–231 (MQTSLLKPKI…DQLSVFAALE (231 aa)) is alpha N-terminal domain (alpha-NTD). The segment at 246–325 (IDPILLRPVD…ENWPPAGLDK (80 aa)) is alpha C-terminal domain (alpha-CTD).

Belongs to the RNA polymerase alpha chain family. As to quaternary structure, homodimer. The RNAP catalytic core consists of 2 alpha, 1 beta, 1 beta' and 1 omega subunit. When a sigma factor is associated with the core the holoenzyme is formed, which can initiate transcription.

It carries out the reaction RNA(n) + a ribonucleoside 5'-triphosphate = RNA(n+1) + diphosphate. In terms of biological role, DNA-dependent RNA polymerase catalyzes the transcription of DNA into RNA using the four ribonucleoside triphosphates as substrates. This is DNA-directed RNA polymerase subunit alpha from Burkholderia multivorans (strain ATCC 17616 / 249).